The sequence spans 246 residues: UDP-N-acetyl-D-mannosaminuronic acid transferase (246 aa).

It belongs to the glycosyltransferase 26 family.

It catalyses the reaction UDP-N-acetyl-alpha-D-mannosaminouronate + N-acetyl-alpha-D-glucosaminyl-di-trans,octa-cis-undecaprenyl diphosphate = beta-D-ManNAcA-(1-&gt;4)-alpha-D-GlcNAc-di-trans,octa-cis-undecaprenyl diphosphate + UDP + H(+). The protein operates within bacterial outer membrane biogenesis; enterobacterial common antigen biosynthesis. In terms of biological role, catalyzes the synthesis of Und-PP-GlcNAc-ManNAcA (Lipid II), the second lipid-linked intermediate involved in enterobacterial common antigen (ECA) synthesis. The protein is UDP-N-acetyl-D-mannosaminuronic acid transferase of Escherichia coli (strain K12).